A 499-amino-acid chain; its full sequence is Importin subunit alpha-8 (499 aa).

The 57-residue stretch at 1–57 folds into the IBB domain; the sequence is MATSKAPKERLKNYKYRGKEMSLPRQQRIASSLQLRKTRKDEQVLKRRNIDLFSSDM. ARM repeat units lie at residues 101-141, 144-183, 186-226, 229-268, 271-310, 313-352, 354-393, and 397-436; these read TPPL…NIAS, SEQT…NIAG, AEFR…NLCR, DPYP…YLTK, KEYI…NIVA, DEQT…NVAA, PRHQ…NIAT, and QDQL…YLLQ.

It belongs to the importin alpha family. Binds to importin subunit beta-1/KPNB1 via the IBB domain; this complex dissociates in the presence of RAN-GTP. Shows a limited binding to the RB1 nuclear localization signal (NLS), but not to the SV40, nor NPM1 NLSs. Interacts with RSL1D1. As to expression, expressed predominantly in ovary. Isoform 1 is the predominant form.

It is found in the nucleus. In terms of biological role, functions in nuclear protein import. This is Importin subunit alpha-8 (Kpna7) from Mus musculus (Mouse).